The primary structure comprises 334 residues: Phosphate acyltransferase (334 aa).

The protein belongs to the PlsX family. As to quaternary structure, homodimer. Probably interacts with PlsY.

It localises to the cytoplasm. The catalysed reaction is a fatty acyl-[ACP] + phosphate = an acyl phosphate + holo-[ACP]. The protein operates within lipid metabolism; phospholipid metabolism. Functionally, catalyzes the reversible formation of acyl-phosphate (acyl-PO(4)) from acyl-[acyl-carrier-protein] (acyl-ACP). This enzyme utilizes acyl-ACP as fatty acyl donor, but not acyl-CoA. The polypeptide is Phosphate acyltransferase (Clostridium tetani (strain Massachusetts / E88)).